A 345-amino-acid polypeptide reads, in one-letter code: Uroporphyrinogen decarboxylase (345 aa).

Residues 23–27 (RQAGR), Asp-73, Tyr-149, Thr-203, and His-319 contribute to the substrate site.

It belongs to the uroporphyrinogen decarboxylase family. As to quaternary structure, homodimer.

Its subcellular location is the cytoplasm. The catalysed reaction is uroporphyrinogen III + 4 H(+) = coproporphyrinogen III + 4 CO2. It functions in the pathway porphyrin-containing compound metabolism; protoporphyrin-IX biosynthesis; coproporphyrinogen-III from 5-aminolevulinate: step 4/4. Functionally, catalyzes the decarboxylation of four acetate groups of uroporphyrinogen-III to yield coproporphyrinogen-III. The sequence is that of Uroporphyrinogen decarboxylase from Vesicomyosocius okutanii subsp. Calyptogena okutanii (strain HA).